A 304-amino-acid chain; its full sequence is MAQVKRIRRSISGILVLDKPRGMSSNQALQKVRWLLNAEKAGHTGSLDPLATGVLPLCFGEATKFSQYLLDADKGYETVMRMGITTTTGDAEGELLAERDVTVGRDDLEQALPRFRGDIEQVPPMYSALKKDGQPLYKLARAGEVVEREARSVTITRLDLLSFEPPCATLAVSCSKGTYVRTLVEDLGQVLGCGAHVAALRRTQAGPFALAQAITLETLERVHAEGGPEALDQFLMPEDSGLLHWPVLQLSEHSAYYWLHGQPVRAPEAPKFGWLRVQDQTGRFIGIGEVTDDGRIAPRRLIRS.

Residue Asp-48 is the Nucleophile of the active site.

Belongs to the pseudouridine synthase TruB family. Type 1 subfamily.

The catalysed reaction is uridine(55) in tRNA = pseudouridine(55) in tRNA. Its function is as follows. Responsible for synthesis of pseudouridine from uracil-55 in the psi GC loop of transfer RNAs. This chain is tRNA pseudouridine synthase B, found in Pseudomonas aeruginosa (strain UCBPP-PA14).